The following is a 207-amino-acid chain: uncharacterized protein (207 aa).

This is an uncharacterized protein from Haemophilus influenzae (strain ATCC 51907 / DSM 11121 / KW20 / Rd).